The primary structure comprises 634 residues: Chaperone protein HtpG (634 aa).

The a; substrate-binding stretch occupies residues 1-339 (MAQETMSFQA…SADLPLNVSR (339 aa)). The tract at residues 340–559 (EILQESRDVK…DGEMSGYLQR (220 aa)) is b. The tract at residues 560-634 (MLKAAGQQAP…ALLLARANEA (75 aa)) is c.

Belongs to the heat shock protein 90 family. Homodimer.

The protein localises to the cytoplasm. Its function is as follows. Molecular chaperone. Has ATPase activity. The chain is Chaperone protein HtpG from Paraburkholderia xenovorans (strain LB400).